The chain runs to 470 residues: Argininosuccinate lyase (470 aa).

It belongs to the lyase 1 family. Argininosuccinate lyase subfamily.

The protein resides in the cytoplasm. The enzyme catalyses 2-(N(omega)-L-arginino)succinate = fumarate + L-arginine. The protein operates within amino-acid biosynthesis; L-arginine biosynthesis; L-arginine from L-ornithine and carbamoyl phosphate: step 3/3. This is Argininosuccinate lyase from Mycolicibacterium vanbaalenii (strain DSM 7251 / JCM 13017 / BCRC 16820 / KCTC 9966 / NRRL B-24157 / PYR-1) (Mycobacterium vanbaalenii).